The chain runs to 1887 residues: Bifunctional serine/threonine-protein kinase/NEDD4-like E3 ubiquitin-protein ligase (1887 aa).

Disordered stretches follow at residues 19 to 55 (TPQV…TTNF) and 72 to 98 (TDNY…TKEN). 2 stretches are compositionally biased toward low complexity: residues 26-54 (NNSN…STTN) and 72-97 (TDNY…NTKE). RCC1 repeat units follow at residues 206-260 (QGNL…ALTI), 262-314 (GKVY…NNNN), 356-409 (KGLL…VLTN), 411-470 (GLVF…AISD), 472-528 (NDTY…AMSI), and 529-581 (DGSL…IVEK). Residues 299–333 (NNNNNNNNNNSTNNNNNNNNDGAQQQFSLSQNSSS) are disordered. Disordered regions lie at residues 594-619 (LPSS…SDSN), 823-858 (VLVH…KNGT), and 1030-1088 (DDDN…NNNN). A compositionally biased stretch (basic and acidic residues) spans 825–839 (VHQDEKQQQREKSET). Over residues 840-852 (ELEEEQDEEEEDS) the composition is skewed to acidic residues. Positions 1036–1088 (ENNSVNNNSNNNNNNNNNNNNNNNNNNNNNNNIDNNINSNSINDSSNNNNNNN) are enriched in low complexity. The Protein kinase domain occupies 1158–1437 (YDIIKTLSTH…AHQIAVHPYF (280 aa)). ATP contacts are provided by residues 1164 to 1172 (LSTHPHNVY) and Lys1184. Residue Asp1281 is the Proton acceptor of the active site. One can recognise an HECT domain in the interval 1501 to 1887 (ESNKLFCRLE…LEYVDGFAFI (387 aa)). The interval 1586–1628 (NNNNNNEENNNNNNNNNNNNNNNNNNNNNNNNNNNNNNNNNEE) is disordered. Catalysis depends on Cys1855, which acts as the Glycyl thioester intermediate.

The protein in the N-terminal section; belongs to the protein kinase superfamily. Ser/Thr protein kinase family. This sequence in the C-terminal section; belongs to the protein kinase superfamily. CAMK Ser/Thr protein kinase family.

It catalyses the reaction L-seryl-[protein] + ATP = O-phospho-L-seryl-[protein] + ADP + H(+). The enzyme catalyses L-threonyl-[protein] + ATP = O-phospho-L-threonyl-[protein] + ADP + H(+). It carries out the reaction S-ubiquitinyl-[E2 ubiquitin-conjugating enzyme]-L-cysteine + [acceptor protein]-L-lysine = [E2 ubiquitin-conjugating enzyme]-L-cysteine + N(6)-ubiquitinyl-[acceptor protein]-L-lysine.. It participates in protein modification; protein ubiquitination. This Dictyostelium discoideum (Social amoeba) protein is Bifunctional serine/threonine-protein kinase/NEDD4-like E3 ubiquitin-protein ligase.